A 206-amino-acid chain; its full sequence is MKTTHTSLPFAGHTLHFVEFDPANFCEQDLLWLPHYAQLQHAGRKRKTEHLAGRIAAVYALREYGYKCVPAIGELRQPVWPAEVYGSISHCGTTALAVVSRQPIGIDIEEIFSVQTARELTDNIITPAEHERLADCGLAFSLALTLAFSAKESAFKASEIQTDAGFLDYQIISWNKQQVIIHRENEMFAVHWQIKEKIVITLCQHD.

Residues Asp107, Glu109, and Glu152 each coordinate Mg(2+).

It belongs to the P-Pant transferase superfamily. EntD family. EntB, EntD, EntE, and EntF form a multienzyme complex called enterobactin synthase. It depends on Mg(2+) as a cofactor.

It localises to the membrane. It carries out the reaction apo-[aryl-carrier protein] + CoA = holo-[aryl-carrier protein] + adenosine 3',5'-bisphosphate + H(+). The enzyme catalyses apo-[peptidyl-carrier protein] + CoA = holo-[peptidyl-carrier protein] + adenosine 3',5'-bisphosphate + H(+). The protein operates within siderophore biosynthesis; enterobactin biosynthesis. In terms of biological role, involved in the biosynthesis of the siderophore enterobactin (enterochelin), which is a macrocyclic trimeric lactone of N-(2,3-dihydroxybenzoyl)-serine. The serine trilactone serves as a scaffolding for the three catechol functionalities that provide hexadentate coordination for the tightly ligated iron(2+) atoms. Plays an essential role in the assembly of the enterobactin by catalyzing the transfer of the 4'-phosphopantetheine (Ppant) moiety from coenzyme A to the apo-domains of both EntB (ArCP domain) and EntF (PCP domain) to yield their holo-forms which make them competent for the activation of 2,3-dihydroxybenzoate (DHB) and L-serine, respectively. The chain is Enterobactin synthase component D from Escherichia coli (strain K12).